Here is a 432-residue protein sequence, read N- to C-terminus: UDP-N-acetylglucosamine 1-carboxyvinyltransferase (432 aa).

A phosphoenolpyruvate-binding site is contributed by 22-23; it reads KN. R92 lines the UDP-N-acetyl-alpha-D-glucosamine pocket. C116 functions as the Proton donor in the catalytic mechanism. At C116 the chain carries 2-(S-cysteinyl)pyruvic acid O-phosphothioketal. UDP-N-acetyl-alpha-D-glucosamine-binding positions include 121–125, D307, and I329; that span reads RPVDQ.

Belongs to the EPSP synthase family. MurA subfamily.

The protein resides in the cytoplasm. It carries out the reaction phosphoenolpyruvate + UDP-N-acetyl-alpha-D-glucosamine = UDP-N-acetyl-3-O-(1-carboxyvinyl)-alpha-D-glucosamine + phosphate. The protein operates within cell wall biogenesis; peptidoglycan biosynthesis. Cell wall formation. Adds enolpyruvyl to UDP-N-acetylglucosamine. The polypeptide is UDP-N-acetylglucosamine 1-carboxyvinyltransferase (Psychrobacter sp. (strain PRwf-1)).